Here is a 24-residue protein sequence, read N- to C-terminus: Humanin-like 11 (24 aa).

This sequence belongs to the humanin family.

The protein resides in the secreted. It is found in the cytoplasm. In terms of biological role, plays a role as a neuroprotective and antiapoptotic factor. The sequence is that of Humanin-like 11 from Homo sapiens (Human).